An 824-amino-acid chain; its full sequence is Leucine--tRNA ligase (824 aa).

A 'HIGH' region motif is present at residues 42-52 (PYPSGRIHMGH). Positions 581–585 (KMSKS) match the 'KMSKS' region motif. Lysine 584 contributes to the ATP binding site.

The protein belongs to the class-I aminoacyl-tRNA synthetase family.

It localises to the cytoplasm. The catalysed reaction is tRNA(Leu) + L-leucine + ATP = L-leucyl-tRNA(Leu) + AMP + diphosphate. The sequence is that of Leucine--tRNA ligase from Geobacter metallireducens (strain ATCC 53774 / DSM 7210 / GS-15).